The following is a 383-amino-acid chain: S-adenosylmethionine synthase (383 aa).

Residue histidine 15 participates in ATP binding. Aspartate 17 is a binding site for Mg(2+). Glutamate 43 serves as a coordination point for K(+). Glutamate 56 and glutamine 99 together coordinate L-methionine. The tract at residues 99-109 is flexible loop; sequence QSSDINQGVDR. ATP contacts are provided by residues 164-166, 230-231, aspartate 239, 245-246, alanine 262, and lysine 266; these read DAK, RF, and RK. Aspartate 239 is an L-methionine binding site. L-methionine is bound at residue lysine 270.

It belongs to the AdoMet synthase family. In terms of assembly, homotetramer; dimer of dimers. Mg(2+) is required as a cofactor. K(+) serves as cofactor.

Its subcellular location is the cytoplasm. The catalysed reaction is L-methionine + ATP + H2O = S-adenosyl-L-methionine + phosphate + diphosphate. It functions in the pathway amino-acid biosynthesis; S-adenosyl-L-methionine biosynthesis; S-adenosyl-L-methionine from L-methionine: step 1/1. In terms of biological role, catalyzes the formation of S-adenosylmethionine (AdoMet) from methionine and ATP. The overall synthetic reaction is composed of two sequential steps, AdoMet formation and the subsequent tripolyphosphate hydrolysis which occurs prior to release of AdoMet from the enzyme. This Mannheimia succiniciproducens (strain KCTC 0769BP / MBEL55E) protein is S-adenosylmethionine synthase.